The primary structure comprises 125 residues: Large ribosomal subunit protein bL12 (125 aa).

The protein belongs to the bacterial ribosomal protein bL12 family. In terms of assembly, homodimer. Part of the ribosomal stalk of the 50S ribosomal subunit. Forms a multimeric L10(L12)X complex, where L10 forms an elongated spine to which 2 to 4 L12 dimers bind in a sequential fashion. Binds GTP-bound translation factors.

Its function is as follows. Forms part of the ribosomal stalk which helps the ribosome interact with GTP-bound translation factors. Is thus essential for accurate translation. In Rickettsia canadensis (strain McKiel), this protein is Large ribosomal subunit protein bL12.